Reading from the N-terminus, the 576-residue chain is 2-succinyl-5-enolpyruvyl-6-hydroxy-3-cyclohexene-1-carboxylate synthase (576 aa).

Belongs to the TPP enzyme family. MenD subfamily. Homodimer. Mg(2+) serves as cofactor. It depends on Mn(2+) as a cofactor. The cofactor is thiamine diphosphate.

The enzyme catalyses isochorismate + 2-oxoglutarate + H(+) = 5-enolpyruvoyl-6-hydroxy-2-succinyl-cyclohex-3-ene-1-carboxylate + CO2. It functions in the pathway quinol/quinone metabolism; 1,4-dihydroxy-2-naphthoate biosynthesis; 1,4-dihydroxy-2-naphthoate from chorismate: step 2/7. It participates in quinol/quinone metabolism; menaquinone biosynthesis. Its function is as follows. Catalyzes the thiamine diphosphate-dependent decarboxylation of 2-oxoglutarate and the subsequent addition of the resulting succinic semialdehyde-thiamine pyrophosphate anion to isochorismate to yield 2-succinyl-5-enolpyruvyl-6-hydroxy-3-cyclohexene-1-carboxylate (SEPHCHC). The protein is 2-succinyl-5-enolpyruvyl-6-hydroxy-3-cyclohexene-1-carboxylate synthase of Aliivibrio fischeri (strain ATCC 700601 / ES114) (Vibrio fischeri).